We begin with the raw amino-acid sequence, 171 residues long: ATP synthase subunit b (171 aa).

The helical transmembrane segment at 24–44 threads the bilayer; sequence INLVIVIGVLYWFLKGFLGGI.

The protein belongs to the ATPase B chain family. As to quaternary structure, F-type ATPases have 2 components, F(1) - the catalytic core - and F(0) - the membrane proton channel. F(1) has five subunits: alpha(3), beta(3), gamma(1), delta(1), epsilon(1). F(0) has four main subunits: a(1), b(1), b'(1) and c(10-14). The alpha and beta chains form an alternating ring which encloses part of the gamma chain. F(1) is attached to F(0) by a central stalk formed by the gamma and epsilon chains, while a peripheral stalk is formed by the delta, b and b' chains.

The protein resides in the cellular thylakoid membrane. Functionally, f(1)F(0) ATP synthase produces ATP from ADP in the presence of a proton or sodium gradient. F-type ATPases consist of two structural domains, F(1) containing the extramembraneous catalytic core and F(0) containing the membrane proton channel, linked together by a central stalk and a peripheral stalk. During catalysis, ATP synthesis in the catalytic domain of F(1) is coupled via a rotary mechanism of the central stalk subunits to proton translocation. Its function is as follows. Component of the F(0) channel, it forms part of the peripheral stalk, linking F(1) to F(0). In Synechococcus sp. (strain WH7803), this protein is ATP synthase subunit b.